The chain runs to 234 residues: Cell fusion protein dni1 (234 aa).

Residues 1 to 32 form the signal peptide; the sequence is MLFLHSVVQGTGTLCTLAAWILLALVMTGCQS. Residues 33 to 96 are Extracellular-facing; it reads STTSKFQLFS…RSKFLINEVH (64 aa). Residues 97-117 traverse the membrane as a helical segment; sequence PWMIVFSFCVCGVSFLMGVVS. Over 118–132 the chain is Cytoplasmic; that stretch reads SLPLIGRLEFLRNIR. The helical transmembrane segment at 133 to 153 threads the bilayer; it reads ISLSFFSFFSILVTALFAHVA. Over 154–178 the chain is Extracellular; sequence VSSFVMAVGNGTQNRVTASLGKKAM. A helical membrane pass occupies residues 179-199; that stretch reads IFLWCSMGLVTLTGITDSIIL. The Cytoplasmic segment spans residues 200–234; the sequence is LVTSRTKKIRKTILEKSKVLTPSSSFSSKSSTTKY.

Belongs to the SUR7 family.

It is found in the cell membrane. It localises to the cell tip. Cell membrane protein which plays a relevant role in coordinating membrane organization and cell wall remodeling during mating. The sequence is that of Cell fusion protein dni1 (dni1) from Schizosaccharomyces pombe (strain 972 / ATCC 24843) (Fission yeast).